The following is a 287-amino-acid chain: MEGIIIKGIGGFYYIKTDEGIIECKARGKFRYNSLKPMVGDRVTIKVENGKGVIEDIHERSSELIRPTVANVTQAFVVFAIKNPDINLDLLNRFLTLCEYNDIHAVVCLNKEDLCTEEEKENLKELINDIGYEVLFINAKEGKGFDALKERLEHNITVLCGPSGAGKSTLLNSFIDREHMETGSVSEKIGRGKHTTRHSELIDVDNGYLVDTPGFTTLDVTFIDRDSLKYCFPEFNDYNNLCKFNGCNHYKEPKCAVKEAVEEGKINKLRYDFYIKTLEEIINRRGN.

The region spanning 61–218 is the CP-type G domain; it reads SSELIRPTVA…LVDTPGFTTL (158 aa). GTP-binding positions include 110–113 and 161–169; these read NKED and GPSGAGKST. Residues Cys-242, Cys-247, His-249, and Cys-255 each coordinate Zn(2+).

Belongs to the TRAFAC class YlqF/YawG GTPase family. RsgA subfamily. In terms of assembly, monomer. Associates with 30S ribosomal subunit, binds 16S rRNA. Zn(2+) serves as cofactor.

Its subcellular location is the cytoplasm. One of several proteins that assist in the late maturation steps of the functional core of the 30S ribosomal subunit. Helps release RbfA from mature subunits. May play a role in the assembly of ribosomal proteins into the subunit. Circularly permuted GTPase that catalyzes slow GTP hydrolysis, GTPase activity is stimulated by the 30S ribosomal subunit. In Clostridium perfringens (strain ATCC 13124 / DSM 756 / JCM 1290 / NCIMB 6125 / NCTC 8237 / Type A), this protein is Small ribosomal subunit biogenesis GTPase RsgA.